The primary structure comprises 511 residues: NADH-ubiquinone oxidoreductase chain 4 (511 aa).

A run of 14 helical transmembrane segments spans residues 1–21 (MNQILIQGVIIIISLLSIIII), 39–59 (ISLLLIIYFIYIGIYINYLFN), 78–98 (IDGISLWLINLTLILLPISLI), 116–136 (VLLILIIGIIIILNFICLDLI), 137–157 (TFYILFEATLLPLFILIGKLG), 186–206 (YIFIYTLFSSLFMLLSIGIYI), 220–240 (IILSIDLQSIIFIGLIIGILV), 264–284 (IILAGIIIKLAIYAIIRLILI), 289–309 (VIIIYNPLIYTIGILTIFYIG), 318–338 (IKVIIAYSSIIHMAIAIMSIF), 349–369 (LLISIAHGFASPALFLLVGGI), 388–408 (YMPIFSIYLLIAGLFNMGIPL), 422–442 (IFIYNSLFAILSTFSLFITTI), and 476–496 (LLLNILFFFIILFGIYPNLII).

It belongs to the complex I subunit 4 family.

The protein localises to the mitochondrion membrane. It carries out the reaction a ubiquinone + NADH + 5 H(+)(in) = a ubiquinol + NAD(+) + 4 H(+)(out). Functionally, core subunit of the mitochondrial membrane respiratory chain NADH dehydrogenase (Complex I) that is believed to belong to the minimal assembly required for catalysis. Complex I functions in the transfer of electrons from NADH to the respiratory chain. The immediate electron acceptor for the enzyme is believed to be ubiquinone. The polypeptide is NADH-ubiquinone oxidoreductase chain 4 (ND4) (Wickerhamomyces canadensis (Yeast)).